The following is a 324-amino-acid chain: tRNA dimethylallyltransferase (324 aa).

ATP is bound at residue G17–T24. Position 19-24 (T19–T24) interacts with substrate. Interaction with substrate tRNA regions lie at residues D42–L45, Q166–R170, R251–R256, and K284–R291.

It belongs to the IPP transferase family. In terms of assembly, monomer. It depends on Mg(2+) as a cofactor.

It catalyses the reaction adenosine(37) in tRNA + dimethylallyl diphosphate = N(6)-dimethylallyladenosine(37) in tRNA + diphosphate. Its function is as follows. Catalyzes the transfer of a dimethylallyl group onto the adenine at position 37 in tRNAs that read codons beginning with uridine, leading to the formation of N6-(dimethylallyl)adenosine (i(6)A). This chain is tRNA dimethylallyltransferase, found in Burkholderia lata (strain ATCC 17760 / DSM 23089 / LMG 22485 / NCIMB 9086 / R18194 / 383).